The sequence spans 86 residues: Neuropeptide-like 2 (86 aa).

The first 19 residues, 1-19, serve as a signal peptide directing secretion; that stretch reads MAKLAICILVFALFALALS. Propeptides lie at residues 20 to 34 and 45 to 86; these read ARVPREESNPAQEFL and IEKL…AAST.

As to expression, hemolymph (at protein level).

The protein resides in the secreted. This Drosophila melanogaster (Fruit fly) protein is Neuropeptide-like 2 (Nplp2).